Reading from the N-terminus, the 234-residue chain is Zinc finger FYVE domain-containing protein 21 (234 aa).

The FYVE-type zinc finger occupies 44-104 (DKECPRCMQC…QCADCALVSH (61 aa)). Positions 50, 53, 66, 69, 74, 77, 96, and 99 each coordinate Zn(2+). The segment at 107-234 (AEFYDKQLKV…TKLLYESRDQ (128 aa)) is PH-like.

Interacts with PTK2/FAK1.

It is found in the cell junction. Its subcellular location is the focal adhesion. The protein resides in the cytoplasmic vesicle. It localises to the endosome. In terms of biological role, plays a role in cell adhesion, and thereby in cell motility which requires repeated formation and disassembly of focal adhesions. Regulates microtubule-induced PTK2/FAK1 dephosphorylation, an event important for focal adhesion disassembly, as well as integrin beta-1/ITGB1 cell surface expression. The protein is Zinc finger FYVE domain-containing protein 21 (Zfyve21) of Rattus norvegicus (Rat).